The sequence spans 289 residues: ATP phosphoribosyltransferase (289 aa).

It belongs to the ATP phosphoribosyltransferase family. Long subfamily. Requires Mg(2+) as cofactor.

It is found in the cytoplasm. The enzyme catalyses 1-(5-phospho-beta-D-ribosyl)-ATP + diphosphate = 5-phospho-alpha-D-ribose 1-diphosphate + ATP. It functions in the pathway amino-acid biosynthesis; L-histidine biosynthesis; L-histidine from 5-phospho-alpha-D-ribose 1-diphosphate: step 1/9. Feedback inhibited by histidine. Its function is as follows. Catalyzes the condensation of ATP and 5-phosphoribose 1-diphosphate to form N'-(5'-phosphoribosyl)-ATP (PR-ATP). Has a crucial role in the pathway because the rate of histidine biosynthesis seems to be controlled primarily by regulation of HisG enzymatic activity. This chain is ATP phosphoribosyltransferase, found in Methanosarcina barkeri (strain Fusaro / DSM 804).